The sequence spans 88 residues: MLATEKKQEIIKAFKKHDSDTGSPEVQIAILTERITYLTEHFKVHKKDHHSRRGLLKLVGQRRRLLDYLKGKEVARYKAVIERLGIRR.

It belongs to the universal ribosomal protein uS15 family. Part of the 30S ribosomal subunit. Forms a bridge to the 50S subunit in the 70S ribosome, contacting the 23S rRNA.

Functionally, one of the primary rRNA binding proteins, it binds directly to 16S rRNA where it helps nucleate assembly of the platform of the 30S subunit by binding and bridging several RNA helices of the 16S rRNA. Forms an intersubunit bridge (bridge B4) with the 23S rRNA of the 50S subunit in the ribosome. This Pelobacter propionicus (strain DSM 2379 / NBRC 103807 / OttBd1) protein is Small ribosomal subunit protein uS15.